The chain runs to 240 residues: 2,3,4,5-tetrahydropyridine-2,6-dicarboxylate N-acetyltransferase (240 aa).

The protein belongs to the transferase hexapeptide repeat family. DapH subfamily.

The catalysed reaction is (S)-2,3,4,5-tetrahydrodipicolinate + acetyl-CoA + H2O = L-2-acetamido-6-oxoheptanedioate + CoA. Its pathway is amino-acid biosynthesis; L-lysine biosynthesis via DAP pathway; LL-2,6-diaminopimelate from (S)-tetrahydrodipicolinate (acetylase route): step 1/3. Catalyzes the transfer of an acetyl group from acetyl-CoA to tetrahydrodipicolinate. The chain is 2,3,4,5-tetrahydropyridine-2,6-dicarboxylate N-acetyltransferase from Bacillus cytotoxicus (strain DSM 22905 / CIP 110041 / 391-98 / NVH 391-98).